The primary structure comprises 88 residues: Small ribosomal subunit protein uS15 (88 aa).

Belongs to the universal ribosomal protein uS15 family. As to quaternary structure, part of the 30S ribosomal subunit. Forms a bridge to the 50S subunit in the 70S ribosome, contacting the 23S rRNA.

Its function is as follows. One of the primary rRNA binding proteins, it binds directly to 16S rRNA where it helps nucleate assembly of the platform of the 30S subunit by binding and bridging several RNA helices of the 16S rRNA. In terms of biological role, forms an intersubunit bridge (bridge B4) with the 23S rRNA of the 50S subunit in the ribosome. In Borrelia hermsii (strain HS1 / DAH), this protein is Small ribosomal subunit protein uS15.